A 502-amino-acid polypeptide reads, in one-letter code: Tryptophan decarboxylase TDC1 (502 aa).

Residues 1-18 (MGSLDSNYDTESPASVGQ) show a composition bias toward polar residues. The interval 1-21 (MGSLDSNYDTESPASVGQFNP) is disordered. At lysine 319 the chain carries N6-(pyridoxal phosphate)lysine.

The protein belongs to the group II decarboxylase family. Requires pyridoxal 5'-phosphate as cofactor. Highly expressed in apex. Expressed in young stem and bark tissues. Expressed at low levels in leaves, fruits and seeds.

The catalysed reaction is L-tryptophan + H(+) = tryptamine + CO2. Its function is as follows. Involved in the biosynthesis of tryptamine. Supplies tryptamine for the indole moiety of camptothecin (CPT), an anti-cancer monoterpene alkaloid. Represents a key step in monoterpene indole alkaloid biosynthesis. Is specific for tryptophan, and inactive against tyrosine, phenylalanine and 3,4-dihydroxyphenylalanine (dopa). This Camptotheca acuminata (Happy tree) protein is Tryptophan decarboxylase TDC1.